A 328-amino-acid polypeptide reads, in one-letter code: Ribosomal RNA large subunit methyltransferase F (328 aa).

The interval methionine 1 to asparagine 31 is disordered.

The protein belongs to the methyltransferase superfamily. METTL16/RlmF family.

It localises to the cytoplasm. It catalyses the reaction adenosine(1618) in 23S rRNA + S-adenosyl-L-methionine = N(6)-methyladenosine(1618) in 23S rRNA + S-adenosyl-L-homocysteine + H(+). Its function is as follows. Specifically methylates the adenine in position 1618 of 23S rRNA. In Pseudomonas savastanoi pv. phaseolicola (strain 1448A / Race 6) (Pseudomonas syringae pv. phaseolicola (strain 1448A / Race 6)), this protein is Ribosomal RNA large subunit methyltransferase F.